A 294-amino-acid chain; its full sequence is UPF0761 membrane protein MADE_1017605/MADE_1018330 (294 aa).

6 helical membrane-spanning segments follow: residues 45–65 (LLSL…FPAF), 99–119 (ASQM…MLIS), 141–161 (FAIY…SVVV), 182–202 (FLLS…LYMV), 213–233 (AFVG…GFAL), and 247–267 (ALAV…IVLF).

It belongs to the UPF0761 family.

The protein localises to the cell inner membrane. The polypeptide is UPF0761 membrane protein MADE_1017605/MADE_1018330 (Alteromonas mediterranea (strain DSM 17117 / CIP 110805 / LMG 28347 / Deep ecotype)).